We begin with the raw amino-acid sequence, 155 residues long: SsrA-binding protein (155 aa).

The protein belongs to the SmpB family.

It localises to the cytoplasm. Functionally, required for rescue of stalled ribosomes mediated by trans-translation. Binds to transfer-messenger RNA (tmRNA), required for stable association of tmRNA with ribosomes. tmRNA and SmpB together mimic tRNA shape, replacing the anticodon stem-loop with SmpB. tmRNA is encoded by the ssrA gene; the 2 termini fold to resemble tRNA(Ala) and it encodes a 'tag peptide', a short internal open reading frame. During trans-translation Ala-aminoacylated tmRNA acts like a tRNA, entering the A-site of stalled ribosomes, displacing the stalled mRNA. The ribosome then switches to translate the ORF on the tmRNA; the nascent peptide is terminated with the 'tag peptide' encoded by the tmRNA and targeted for degradation. The ribosome is freed to recommence translation, which seems to be the essential function of trans-translation. This is SsrA-binding protein from Streptococcus pneumoniae (strain P1031).